A 149-amino-acid chain; its full sequence is Myoglobin (149 aa).

Position 2 is an N-acetylalanine (Ala2). The Globin domain maps to 2-143 (ABWDKVNSVW…ICSDIEKEYK (142 aa)). His89 is a heme b binding site.

It belongs to the globin family. In terms of assembly, monomeric.

The protein resides in the cytoplasm. The protein localises to the sarcoplasm. The catalysed reaction is Fe(III)-heme b-[protein] + nitric oxide + H2O = Fe(II)-heme b-[protein] + nitrite + 2 H(+). It catalyses the reaction H2O2 + AH2 = A + 2 H2O. In terms of biological role, monomeric heme protein which primary function is to store oxygen and facilitate its diffusion within muscle tissues. Reversibly binds oxygen through a pentacoordinated heme iron and enables its timely and efficient release as needed during periods of heightened demand. Depending on the oxidative conditions of tissues and cells, and in addition to its ability to bind oxygen, it also has a nitrite reductase activity whereby it regulates the production of bioactive nitric oxide. Under stress conditions, like hypoxia and anoxia, it also protects cells against reactive oxygen species thanks to its pseudoperoxidase activity. This Hemitriakis japanica (Japanese topeshark) protein is Myoglobin (mb).